A 698-amino-acid polypeptide reads, in one-letter code: Elongation factor G 1 (698 aa).

In terms of domain architecture, tr-type G spans 8–290 (ERYRNIGICA…AVVEFLPAPV (283 aa)). Residues 17–24 (AHVDAGKT), 88–92 (DTPGH), and 142–145 (NKMD) contribute to the GTP site.

Belongs to the TRAFAC class translation factor GTPase superfamily. Classic translation factor GTPase family. EF-G/EF-2 subfamily.

Its subcellular location is the cytoplasm. Catalyzes the GTP-dependent ribosomal translocation step during translation elongation. During this step, the ribosome changes from the pre-translocational (PRE) to the post-translocational (POST) state as the newly formed A-site-bound peptidyl-tRNA and P-site-bound deacylated tRNA move to the P and E sites, respectively. Catalyzes the coordinated movement of the two tRNA molecules, the mRNA and conformational changes in the ribosome. This Shewanella sp. (strain MR-4) protein is Elongation factor G 1.